We begin with the raw amino-acid sequence, 547 residues long: MAAKDVKFGNDARVKMLNGVNILADAVKVTLGPKGRNVVLDKSFGAPTITKDGVSVAREIELEDKFENMGAQMVKEVASKANDAAGDGTTTATVLAQAIVNEGLKAVAAGMNPMDLKRGIDKAVNSVVAELKNLSKPCETSKEIEQVGTISANSDSIVGQLIAQAMEKVGKEGVITVEDGTGLEDELDVVEGMQFDRGYLSPYFINKPETATVELDNPFILLVDKKISNIRELLPVLEGVAKAGKPLLIIAEDVEGEALATLVVNTMRGIVKVAAVKAPGFGDRRKAMLQDIAILTAGTVISEEIGMELEKATLEDLGQAKRIVINKDNTTIIDGIGDEAQIQGRVAQIRQQIEESTSDYDKEKLQERVAKLAGGVAVIKVGAATEVEMKEKKARVEDALHATRAAVEEGIVAGGGVALIRAAGRVVGLQGENEEQNVGIKLALRAMEAPLRQIVANAGEEASVIASAVKNGEGNFGYNAGTEQYGDMIAMGILDPTKVTRSALQFAASVAGLMITTECMVTELPKDDKADLGAAGMGGMGGMGGMM.

ATP contacts are provided by residues 30 to 33 (TLGP), K51, 87 to 91 (DGTTT), G415, and D495.

Belongs to the chaperonin (HSP60) family. In terms of assembly, forms a cylinder of 14 subunits composed of two heptameric rings stacked back-to-back. Interacts with the co-chaperonin GroES.

The protein resides in the cytoplasm. It carries out the reaction ATP + H2O + a folded polypeptide = ADP + phosphate + an unfolded polypeptide.. Functionally, together with its co-chaperonin GroES, plays an essential role in assisting protein folding. The GroEL-GroES system forms a nano-cage that allows encapsulation of the non-native substrate proteins and provides a physical environment optimized to promote and accelerate protein folding. This chain is Chaperonin GroEL, found in Aggregatibacter actinomycetemcomitans (Actinobacillus actinomycetemcomitans).